The following is a 339-amino-acid chain: Dihydroorotate dehydrogenase (quinone) (339 aa).

FMN is bound by residues A62–K66 and T86. K66 provides a ligand contact to substrate. N111 to F115 contacts substrate. FMN-binding residues include N139 and N172. N172 is a substrate binding site. S175 (nucleophile) is an active-site residue. N177 serves as a coordination point for substrate. K217 and T245 together coordinate FMN. Substrate is bound at residue N246–T247. Residues G268, G297, and F318–S319 contribute to the FMN site.

This sequence belongs to the dihydroorotate dehydrogenase family. Type 2 subfamily. As to quaternary structure, monomer. It depends on FMN as a cofactor.

The protein resides in the cell membrane. It catalyses the reaction (S)-dihydroorotate + a quinone = orotate + a quinol. It functions in the pathway pyrimidine metabolism; UMP biosynthesis via de novo pathway; orotate from (S)-dihydroorotate (quinone route): step 1/1. Its function is as follows. Catalyzes the conversion of dihydroorotate to orotate with quinone as electron acceptor. The polypeptide is Dihydroorotate dehydrogenase (quinone) (Shewanella halifaxensis (strain HAW-EB4)).